We begin with the raw amino-acid sequence, 141 residues long: Large ribosomal subunit protein uL11 (141 aa).

The protein belongs to the universal ribosomal protein uL11 family. As to quaternary structure, part of the ribosomal stalk of the 50S ribosomal subunit. Interacts with L10 and the large rRNA to form the base of the stalk. L10 forms an elongated spine to which L12 dimers bind in a sequential fashion forming a multimeric L10(L12)X complex. Post-translationally, one or more lysine residues are methylated.

Forms part of the ribosomal stalk which helps the ribosome interact with GTP-bound translation factors. This chain is Large ribosomal subunit protein uL11, found in Trichlorobacter lovleyi (strain ATCC BAA-1151 / DSM 17278 / SZ) (Geobacter lovleyi).